A 311-amino-acid polypeptide reads, in one-letter code: Small ribosomal subunit biogenesis GTPase RsgA (311 aa).

The CP-type G domain maps to Ser88 to Phe246. Residues Asn137–Asp140 and Gly188–Thr196 contribute to the GTP site. Positions 270, 275, 277, and 283 each coordinate Zn(2+).

This sequence belongs to the TRAFAC class YlqF/YawG GTPase family. RsgA subfamily. In terms of assembly, monomer. Associates with 30S ribosomal subunit, binds 16S rRNA. Zn(2+) serves as cofactor.

The protein resides in the cytoplasm. In terms of biological role, one of several proteins that assist in the late maturation steps of the functional core of the 30S ribosomal subunit. Helps release RbfA from mature subunits. May play a role in the assembly of ribosomal proteins into the subunit. Circularly permuted GTPase that catalyzes slow GTP hydrolysis, GTPase activity is stimulated by the 30S ribosomal subunit. This chain is Small ribosomal subunit biogenesis GTPase RsgA, found in Chlorobaculum parvum (strain DSM 263 / NCIMB 8327) (Chlorobium vibrioforme subsp. thiosulfatophilum).